A 621-amino-acid chain; its full sequence is 2-hydroxyacyl-CoA lyase 2 (621 aa).

The chain crosses the membrane as a helical span at residues 7–29; it reads LGCSLGAALGGVIFASYKLGLLY. Residue Glu-87 coordinates thiamine diphosphate. The thiamine pyrophosphate binding stretch occupies residues 459 to 539; it reads DFVGSAAYIM…VIALVGNDAC (81 aa). Residues Asp-510 and Asn-536 each contribute to the Mg(2+) site.

This sequence belongs to the TPP enzyme family. Requires Mg(2+) as cofactor. It depends on thiamine diphosphate as a cofactor.

Its subcellular location is the endoplasmic reticulum membrane. It carries out the reaction 2-hydroxyoctadecanoyl-CoA = heptadecanal + formyl-CoA. The enzyme catalyses (2R)-hydroxyhexadecanoyl-CoA = pentadecanal + formyl-CoA. Its function is as follows. Endoplasmic reticulum 2-OH acyl-CoA lyase involved in the cleavage (C1 removal) reaction in the fatty acid alpha-oxydation in a thiamine pyrophosphate (TPP)-dependent manner. In Danio rerio (Zebrafish), this protein is 2-hydroxyacyl-CoA lyase 2 (ilvbl).